The primary structure comprises 501 residues: NAD(P)H-quinone oxidoreductase subunit 2, chloroplastic (501 aa).

Helical transmembrane passes span 15–35 (ILPE…DLTF), 40–60 (TIWL…ILLF), 82–102 (IFQS…IEYI), 107–127 (MAIP…MFLC), 132–152 (LVTI…LCGY), 167–187 (LLIG…LYGL), 212–232 (TFIA…LVPF), 244–264 (PTPV…ALAT), 278–298 (WKIF…LVAI), 307–327 (LAYS…TGDL), 333–353 (MTIY…CIIL), 378–398 (FSLT…GFFG), 410–430 (GFYL…YYYL), and 466–486 (FVMI…NPIF).

Belongs to the complex I subunit 2 family. In terms of assembly, NDH is composed of at least 16 different subunits, 5 of which are encoded in the nucleus.

The protein resides in the plastid. The protein localises to the chloroplast thylakoid membrane. It catalyses the reaction a plastoquinone + NADH + (n+1) H(+)(in) = a plastoquinol + NAD(+) + n H(+)(out). The enzyme catalyses a plastoquinone + NADPH + (n+1) H(+)(in) = a plastoquinol + NADP(+) + n H(+)(out). Functionally, NDH shuttles electrons from NAD(P)H:plastoquinone, via FMN and iron-sulfur (Fe-S) centers, to quinones in the photosynthetic chain and possibly in a chloroplast respiratory chain. The immediate electron acceptor for the enzyme in this species is believed to be plastoquinone. Couples the redox reaction to proton translocation, and thus conserves the redox energy in a proton gradient. The protein is NAD(P)H-quinone oxidoreductase subunit 2, chloroplastic of Marchantia polymorpha (Common liverwort).